A 712-amino-acid polypeptide reads, in one-letter code: Interleukin-1 receptor-associated kinase 1 (712 aa).

The Death domain maps to 27–106; it reads MCRFYKVMDA…DIITAWHPPA (80 aa). T66 is subject to Phosphothreonine; by PKC/PRKCI. The segment at 105 to 187 is disordered; the sequence is PAPLPSPGTT…STKPGPESSV (83 aa). The interval 110-211 is proST region; sequence SPGTTAPRPS…LCEISRGTHN (102 aa). Residues 115–133 show a composition bias toward low complexity; it reads APRPSSIPAPAEAEAWSPR. S131 bears the Phosphoserine mark. K134 is covalently cross-linked (Glycyl lysine isopeptide (Lys-Gly) (interchain with G-Cter in ubiquitin)). Over residues 137-154 the composition is skewed to polar residues; the sequence is SSASTFLSPAFPGSQTHS. K180 participates in a covalent cross-link: Glycyl lysine isopeptide (Lys-Gly) (interchain with G-Cter in ubiquitin). T209 carries the post-translational modification Phosphothreonine; by IRAK4. Positions 212 to 521 constitute a Protein kinase domain; that stretch reads FSEELKIGEG…TQVYERLEKL (310 aa). Residues 218 to 226 and K239 each bind ATP; that span reads IGEGGFGCV. D340 acts as the Proton acceptor in catalysis. ATP contacts are provided by residues 342–345 and D358; that span reads KSSN. Phosphoserine occurs at positions 371 and 375. Residue T387 is modified to Phosphothreonine. Disordered regions lie at residues 532 to 591, 613 to 660, and 690 to 712; these read SEAA…SDES, APLR…PPQI, and SSLP…EFQS. Residues 543–553 show a composition bias toward polar residues; sequence QENSYVSSTGR. S556 carries the phosphoserine modification. 2 stretches are compositionally biased toward low complexity: residues 562–575 and 643–658; these read QPLA…AQAA and EGLA…SEPP.

Belongs to the protein kinase superfamily. TKL Ser/Thr protein kinase family. Pelle subfamily. Homodimer. Forms a complex with TRAF6, PELI1, IRAK4 and MYD88. Direct binding of SMAD6 to PELI1 prevents complex formation and hence negatively regulates IL1R-TLR signaling and eventually NF-kappa-B-mediated gene expression. The TRAF6-PELI1-IRAK4-MYD88 complex recruits MAP3K7/TAK1, TAB1 and TAB2 to mediate NF-kappa-B activation. Interaction with MYD88 recruits IRAK1 to the stimulated receptor complex. Interacts with TOLLIP; this interaction occurs in the cytosol prior to receptor activation. Interacts with IL1RL1. Interacts with PELI1 and TRAF6. Interacts (when polyubiquitinated) with IKBKG/NEMO. Interacts with RSAD2/viperin. Interacts with IRAK1BP1. Interacts with PELI2. Interacts with ZC3H12A; this interaction increases the interaction between ZC3H12A and IKBKB/IKKB. Interacts with IRAK4. Interacts with PELI3. Interacts with INAVA; the interaction takes place upon PRR stimulation. Interacts (via C-terminus) with NFATC4 (via N-terminus). In terms of assembly, (Microbial infection) Interacts with mumps virus protein SH; this interaction inhibits downstream NF-kappa-B pathway activation. As to quaternary structure, (Microbial infection) Interacts with alphaviruses SINV, CHIKV, RRV, VEEV and EEEV capsid proteins; the interactions lead to inhibition of IRAK1-dependent signaling. Mg(2+) serves as cofactor. Following recruitment on the activated receptor complex, phosphorylated on Thr-209, probably by IRAK4, resulting in a conformational change of the kinase domain, allowing further phosphorylations to take place. Thr-387 phosphorylation in the activation loop is required to achieve full enzymatic activity. In terms of processing, polyubiquitinated by TRAF6 after cell stimulation with IL-1-beta by PELI1, PELI2 and PELI3. Polyubiquitination occurs with polyubiquitin chains linked through 'Lys-63'. Ubiquitination promotes interaction with NEMO/IKBKG. Also sumoylated; leading to nuclear translocation. As to expression, isoform 1 and isoform 2 are ubiquitously expressed in all tissues examined, with isoform 1 being more strongly expressed than isoform 2.

It localises to the cytoplasm. The protein localises to the nucleus. Its subcellular location is the lipid droplet. It catalyses the reaction L-seryl-[protein] + ATP = O-phospho-L-seryl-[protein] + ADP + H(+). The enzyme catalyses L-threonyl-[protein] + ATP = O-phospho-L-threonyl-[protein] + ADP + H(+). In terms of biological role, serine/threonine-protein kinase that plays a critical role in initiating innate immune response against foreign pathogens. Involved in Toll-like receptor (TLR) and IL-1R signaling pathways. Is rapidly recruited by MYD88 to the receptor-signaling complex upon TLR activation. Association with MYD88 leads to IRAK1 phosphorylation by IRAK4 and subsequent autophosphorylation and kinase activation. Phosphorylates E3 ubiquitin ligases Pellino proteins (PELI1, PELI2 and PELI3) to promote pellino-mediated polyubiquitination of IRAK1. Then, the ubiquitin-binding domain of IKBKG/NEMO binds to polyubiquitinated IRAK1 bringing together the IRAK1-MAP3K7/TAK1-TRAF6 complex and the NEMO-IKKA-IKKB complex. In turn, MAP3K7/TAK1 activates IKKs (CHUK/IKKA and IKBKB/IKKB) leading to NF-kappa-B nuclear translocation and activation. Alternatively, phosphorylates TIRAP to promote its ubiquitination and subsequent degradation. Phosphorylates the interferon regulatory factor 7 (IRF7) to induce its activation and translocation to the nucleus, resulting in transcriptional activation of type I IFN genes, which drive the cell in an antiviral state. When sumoylated, translocates to the nucleus and phosphorylates STAT3. The chain is Interleukin-1 receptor-associated kinase 1 from Homo sapiens (Human).